Here is a 311-residue protein sequence, read N- to C-terminus: Catechol 1,2-dioxygenase 1 (311 aa).

4 residues coordinate Fe cation: Tyr164, Tyr200, His224, and His226.

Belongs to the intradiol ring-cleavage dioxygenase family. In terms of assembly, homodimer. The cofactor is Fe(3+).

It catalyses the reaction catechol + O2 = cis,cis-muconate + 2 H(+). It functions in the pathway aromatic compound metabolism; beta-ketoadipate pathway; 5-oxo-4,5-dihydro-2-furylacetate from catechol: step 1/3. Can cleave 4-methyl-, 4-chloro-, and 3-methoxycatechol at lower rates than catechol, but has no activity with 4-nitrocatechol or protocatechuic acid. The protein is Catechol 1,2-dioxygenase 1 (catA1) of Acinetobacter lwoffii.